Consider the following 466-residue polypeptide: 3-isopropylmalate dehydratase large subunit (466 aa).

Positions 347, 407, and 410 each coordinate [4Fe-4S] cluster.

It belongs to the aconitase/IPM isomerase family. LeuC type 1 subfamily. As to quaternary structure, heterodimer of LeuC and LeuD. [4Fe-4S] cluster is required as a cofactor.

The enzyme catalyses (2R,3S)-3-isopropylmalate = (2S)-2-isopropylmalate. It functions in the pathway amino-acid biosynthesis; L-leucine biosynthesis; L-leucine from 3-methyl-2-oxobutanoate: step 2/4. Catalyzes the isomerization between 2-isopropylmalate and 3-isopropylmalate, via the formation of 2-isopropylmaleate. The chain is 3-isopropylmalate dehydratase large subunit from Shigella flexneri.